A 513-amino-acid chain; its full sequence is Sphingolipid C9-methyltransferase 1 (513 aa).

A run of 2 helical transmembrane segments spans residues 63–83 (FLVA…GGGL) and 85–105 (TAIF…WTVM). Residues 228–229 (YT), 265–273 (LLDIGCGWG), 291–296 (TLARNQ), and 321–322 (YR) each bind S-adenosyl-L-methionine.

Belongs to the CFA/CMAS family.

The protein resides in the membrane. The enzyme catalyses a (4E,8E)-4-sphinga-4,8-dienine ceramide + S-adenosyl-L-methionine = a 9-methyl-(4E,8E)-sphinga-4,8-dienine ceramide + S-adenosyl-L-homocysteine + H(+). The protein operates within lipid metabolism; sphingolipid metabolism. In terms of biological role, catalyzes methylation of the sphingoid base component of glucosylceramides (GluCers) at the C9-position. Sphingolipid C9-methylation requires 4,8-desaturated ceramides as substrates. Glucosylceramides play important roles in the growth, differentiation and pathogenicity. The methyl group at the C9-position distinguishes fungal glucosylceramides from those of plants and animals, and may thus play a role in host-pathogen interactions enabling the host to recognize the fungal attack and initiate specific defense responses. However, C-9 methylation of GlcCers is not essential for the sensitivity of F.graminearum to plant defensins MsDef1 and RsAFP2. The chain is Sphingolipid C9-methyltransferase 1 from Gibberella zeae (strain ATCC MYA-4620 / CBS 123657 / FGSC 9075 / NRRL 31084 / PH-1) (Wheat head blight fungus).